Consider the following 889-residue polypeptide: Cytoplasmic aconitate hydratase (889 aa).

Residues glutamine 86 and 205 to 207 (DSH) each bind substrate. Residues cysteine 437, cysteine 503, and cysteine 506 each contribute to the [4Fe-4S] cluster site. Residues arginine 536, arginine 541, arginine 699, and 779-780 (SR) contribute to the substrate site.

It belongs to the aconitase/IPM isomerase family. As to quaternary structure, interacts (when associated with the 4Fe-4S) with FBXL5. Interacts with frataxin(81-210). [4Fe-4S] cluster serves as cofactor.

It localises to the cytoplasm. The protein resides in the cytosol. The catalysed reaction is citrate = D-threo-isocitrate. In terms of biological role, bifunctional iron sensor that switches between 2 activities depending on iron availability. Iron deprivation, promotes its mRNA binding activity through which it regulates the expression of genes involved in iron uptake, sequestration and utilization. Binds to iron-responsive elements (IRES) in the untranslated region of target mRNAs preventing for instance the translation of ferritin and aminolevulinic acid synthase and stabilizing the transferrin receptor mRNA. Conversely, when cellular iron levels are high, binds a 4Fe-4S cluster which precludes RNA binding activity and promotes the aconitase activity, the isomerization of citrate to isocitrate via cis-aconitate. This is Cytoplasmic aconitate hydratase (ACO1) from Bos taurus (Bovine).